A 390-amino-acid polypeptide reads, in one-letter code: Dual-specificity RNA methyltransferase RlmN (390 aa).

Glu-126 functions as the Proton acceptor in the catalytic mechanism. Residues Thr-134–Asp-374 form the Radical SAM core domain. Cys-141 and Cys-379 form a disulfide bridge. Cys-148, Cys-152, and Cys-155 together coordinate [4Fe-4S] cluster. S-adenosyl-L-methionine is bound by residues Gly-205 to Glu-206, Ser-237, Ser-259 to His-261, and Asn-336. Cys-379 serves as the catalytic S-methylcysteine intermediate.

It belongs to the radical SAM superfamily. RlmN family. Requires [4Fe-4S] cluster as cofactor.

The protein localises to the cytoplasm. It catalyses the reaction adenosine(2503) in 23S rRNA + 2 reduced [2Fe-2S]-[ferredoxin] + 2 S-adenosyl-L-methionine = 2-methyladenosine(2503) in 23S rRNA + 5'-deoxyadenosine + L-methionine + 2 oxidized [2Fe-2S]-[ferredoxin] + S-adenosyl-L-homocysteine. The catalysed reaction is adenosine(37) in tRNA + 2 reduced [2Fe-2S]-[ferredoxin] + 2 S-adenosyl-L-methionine = 2-methyladenosine(37) in tRNA + 5'-deoxyadenosine + L-methionine + 2 oxidized [2Fe-2S]-[ferredoxin] + S-adenosyl-L-homocysteine. In terms of biological role, specifically methylates position 2 of adenine 2503 in 23S rRNA and position 2 of adenine 37 in tRNAs. m2A2503 modification seems to play a crucial role in the proofreading step occurring at the peptidyl transferase center and thus would serve to optimize ribosomal fidelity. This chain is Dual-specificity RNA methyltransferase RlmN, found in Acidiphilium cryptum (strain JF-5).